We begin with the raw amino-acid sequence, 369 residues long: Histidinol-phosphate aminotransferase 2 (369 aa).

Residue K231 is modified to N6-(pyridoxal phosphate)lysine.

This sequence belongs to the class-II pyridoxal-phosphate-dependent aminotransferase family. Histidinol-phosphate aminotransferase subfamily. As to quaternary structure, homodimer. The cofactor is pyridoxal 5'-phosphate.

The enzyme catalyses L-histidinol phosphate + 2-oxoglutarate = 3-(imidazol-4-yl)-2-oxopropyl phosphate + L-glutamate. Its pathway is amino-acid biosynthesis; L-histidine biosynthesis; L-histidine from 5-phospho-alpha-D-ribose 1-diphosphate: step 7/9. The polypeptide is Histidinol-phosphate aminotransferase 2 (Legionella pneumophila (strain Lens)).